A 356-amino-acid chain; its full sequence is Peptide chain release factor 1 (356 aa).

Position 235 is an N5-methylglutamine (glutamine 235).

This sequence belongs to the prokaryotic/mitochondrial release factor family. Methylated by PrmC. Methylation increases the termination efficiency of RF1.

The protein resides in the cytoplasm. Functionally, peptide chain release factor 1 directs the termination of translation in response to the peptide chain termination codons UAG and UAA. In Mycobacteroides abscessus (strain ATCC 19977 / DSM 44196 / CCUG 20993 / CIP 104536 / JCM 13569 / NCTC 13031 / TMC 1543 / L948) (Mycobacterium abscessus), this protein is Peptide chain release factor 1.